Reading from the N-terminus, the 553-residue chain is Major facilitator-type transporter hxnZ (553 aa).

Transmembrane regions (helical) follow at residues 89–109 (FTVAGFGWIVDNFCSQGISAV), 128–148 (VAYYVGMIIGASFWGISSDLI), 152–172 (PAFNSTLAIAGIFLCAAAGTS), 174–194 (FIAFSALWAVIGTAAGGNVVC), and 213–233 (ALSGWWNLGQLVVSLLAWVFL). N-linked (GlcNAc...) asparagine glycosylation occurs at Asn-235. 7 helical membrane passes run 257–277 (YTLITLGGLSLAFTFVRIFVF), 366–386 (ALIWAVWLIIGIAYPLYFNFL), 409–429 (IQSAVGVVGPLSAAVLVNTFL), 433–453 (WMMGISSIVTGVFLFAYVGVK), 459–481 (LAFSCVTGLLANFANQLSEYAIM), 496–516 (TASGTAASLLRFGGLVASLIA), and 525–545 (PIYASAALWVGVGVLCFGLPF).

The protein belongs to the major facilitator superfamily.

Its subcellular location is the cell membrane. Its function is as follows. Major facilitator-type transporter, part of the hnx cluster involved in the purine degradation. The nicotinate hydroxylase hnxS accepts nicotinate as a substrate and catalyzes the first step of nicotinate catabolism. The major facilitator-type transporters hxnP and hxnZ are probably involved in the uptake of nicotinate-derived metabolites, and the oxidoreductases hxnT and hxnY in the further metabolism of 6-OH nicotinic acid. The polypeptide is Major facilitator-type transporter hxnZ (Emericella nidulans (strain FGSC A4 / ATCC 38163 / CBS 112.46 / NRRL 194 / M139) (Aspergillus nidulans)).